We begin with the raw amino-acid sequence, 336 residues long: tRNA N6-adenosine threonylcarbamoyltransferase (336 aa).

2 residues coordinate Fe cation: histidine 114 and histidine 118. Residues 136 to 140 (LVSGG), aspartate 169, glycine 182, aspartate 186, and asparagine 275 contribute to the substrate site. Aspartate 302 serves as a coordination point for Fe cation.

Belongs to the KAE1 / TsaD family. Fe(2+) serves as cofactor.

The protein localises to the cytoplasm. The enzyme catalyses L-threonylcarbamoyladenylate + adenosine(37) in tRNA = N(6)-L-threonylcarbamoyladenosine(37) in tRNA + AMP + H(+). Its function is as follows. Required for the formation of a threonylcarbamoyl group on adenosine at position 37 (t(6)A37) in tRNAs that read codons beginning with adenine. Is involved in the transfer of the threonylcarbamoyl moiety of threonylcarbamoyl-AMP (TC-AMP) to the N6 group of A37, together with TsaE and TsaB. TsaD likely plays a direct catalytic role in this reaction. In Streptococcus agalactiae serotype III (strain NEM316), this protein is tRNA N6-adenosine threonylcarbamoyltransferase.